The chain runs to 156 residues: MVKGRSNKTLAENRKARHDYFVEEAYEAGIELVGTEVKSIREGKANLKDSYAEIRNGEVFLRNMHVSPYEQGNIFNKDPLRDRKLLLHKMQILKLTAYTTQQGYTLIPLSLYLKNGRVKVNLAVAKGKKNYDKRQDLIEKAAKRDIERELKDRSRY.

Belongs to the SmpB family.

It is found in the cytoplasm. Functionally, required for rescue of stalled ribosomes mediated by trans-translation. Binds to transfer-messenger RNA (tmRNA), required for stable association of tmRNA with ribosomes. tmRNA and SmpB together mimic tRNA shape, replacing the anticodon stem-loop with SmpB. tmRNA is encoded by the ssrA gene; the 2 termini fold to resemble tRNA(Ala) and it encodes a 'tag peptide', a short internal open reading frame. During trans-translation Ala-aminoacylated tmRNA acts like a tRNA, entering the A-site of stalled ribosomes, displacing the stalled mRNA. The ribosome then switches to translate the ORF on the tmRNA; the nascent peptide is terminated with the 'tag peptide' encoded by the tmRNA and targeted for degradation. The ribosome is freed to recommence translation, which seems to be the essential function of trans-translation. This is SsrA-binding protein from Clostridium tetani (strain Massachusetts / E88).